The sequence spans 4660 residues: Low-density lipoprotein receptor-related protein 2 (4660 aa).

Positions 1–25 (MERGAAAAAWMLLLAIAACLAPVSG) are cleaved as a signal peptide. Residues 26-4425 (QECGSGNFRC…LSRGIPPGTT (4400 aa)) are Extracellular-facing. LDL-receptor class A domains are found at residues 27–63 (ECGS…IGCP), 66–104 (SCGS…QNCP), 107–143 (TCSS…RNCY), 146–180 (TCDQ…ANCT), 182–218 (LCSQ…HNCN), 221–257 (TCGG…DGCE), and 264–307 (TCYP…RYCG). Disulfide bonds link Cys-28–Cys-40, Cys-35–Cys-53, Cys-47–Cys-62, Cys-67–Cys-80, Cys-74–Cys-93, Cys-87–Cys-103, Cys-108–Cys-120, Cys-115–Cys-133, Cys-127–Cys-142, Cys-147–Cys-157, Cys-152–Cys-170, Cys-164–Cys-179, Cys-183–Cys-195, Cys-190–Cys-208, Cys-202–Cys-217, Cys-222–Cys-234, Cys-229–Cys-247, Cys-241–Cys-256, Cys-265–Cys-278, Cys-272–Cys-291, and Cys-285–Cys-306. Asn-159 and Asn-178 each carry an N-linked (GlcNAc...) asparagine glycan. N-linked (GlcNAc...) asparagine glycosylation is found at Asn-299, Asn-340, Asn-387, and Asn-462. LDL-receptor class B repeat units lie at residues 435 to 477 (HRVF…DWIN), 478 to 520 (NKLY…DPTV), 521 to 567 (GYLF…DLVS), and 568 to 612 (KRVY…FEEH). N-linked (GlcNAc...) asparagine glycosylation is present at Asn-657. LDL-receptor class B repeat units lie at residues 752 to 794 (STIF…DWIS), 795 to 836 (RNLY…HPAA), 837 to 880 (GYMF…DWST), and 881 to 924 (SRLY…FKDN). Asn-865 carries N-linked (GlcNAc...) asparagine glycosylation. Residues 1024–1060 (QCGSSSFPCNNGKCVPSIFRCDGVDDCHDNSDEHQCG) form the LDL-receptor class A 8 domain. Disulfide bonds link Cys-1025–Cys-1037, Cys-1032–Cys-1050, and Cys-1044–Cys-1059. A glycan (N-linked (GlcNAc...) asparagine) is linked at Asn-1063. LDL-receptor class A domains lie at 1065 to 1102 (TCSS…QNCP), 1109 to 1145 (TCPP…KNCQ), 1149 to 1185 (TCHP…AGCV), 1187 to 1224 (NCTS…AGCP), 1230 to 1268 (MCHP…NGCV), 1271 to 1307 (TCSP…KDCP), and 1312 to 1350 (HCPS…PLCN). Intrachain disulfides connect Cys-1066/Cys-1079, Cys-1073/Cys-1092, Cys-1086/Cys-1101, Cys-1110/Cys-1122, Cys-1117/Cys-1135, Cys-1129/Cys-1144, Cys-1150/Cys-1162, Cys-1157/Cys-1175, and Cys-1169/Cys-1184. Ca(2+)-binding residues include Trp-1127, Asp-1130, Asp-1132, Asp-1134, Asp-1140, and Glu-1141. An N-linked (GlcNAc...) asparagine glycan is attached at Asn-1187. 18 cysteine pairs are disulfide-bonded: Cys-1188–Cys-1201, Cys-1195–Cys-1214, Cys-1208–Cys-1223, Cys-1231–Cys-1244, Cys-1238–Cys-1257, Cys-1251–Cys-1267, Cys-1272–Cys-1284, Cys-1279–Cys-1297, Cys-1291–Cys-1306, Cys-1313–Cys-1326, Cys-1320–Cys-1339, Cys-1333–Cys-1349, Cys-1354–Cys-1365, Cys-1361–Cys-1374, Cys-1376–Cys-1389, Cys-1395–Cys-1405, Cys-1401–Cys-1414, and Cys-1416–Cys-1429. The Ca(2+) site is built by Tyr-1206, Asp-1209, Val-1211, Asp-1213, Asp-1219, and Glu-1220. 2 N-linked (GlcNAc...) asparagine glycosylation sites follow: Asn-1328 and Asn-1341. The region spanning 1350–1390 (NQDSCLHFNGGCTHRCIQGPFGATCVCPIGYQLANDTKTCE) is the EGF-like 1 domain. Asn-1384 carries an N-linked (GlcNAc...) asparagine glycan. Residues 1391 to 1430 (DVNECDIPGFCSQHCVNMRGSFRCACDPEYTLESDGRTCK) enclose the EGF-like 2; calcium-binding domain. Residues Asn-1451, Asn-1497, and Asn-1551 are each glycosylated (N-linked (GlcNAc...) asparagine). 5 LDL-receptor class B repeats span residues 1479-1521 (GRVF…DWIG), 1522-1564 (RNIY…DPRM), 1567-1610 (NVMF…DYPN), 1611-1655 (RLIY…FEDS), and 1656-1696 (VFWT…IHPS). 3 N-linked (GlcNAc...) asparagine glycosylation sites follow: Asn-1676, Asn-1733, and Asn-1811. LDL-receptor class B repeat units lie at residues 1791–1833 (QFIY…DWVS), 1834–1883 (RNIY…DPAR), 1884–1931 (GKLY…DIQE), 1932–1973 (QKLY…HGSF), 1974–2014 (LYYS…YHHR), 2108–2157 (GFIY…DWVA), 2158–2202 (GNLY…DPKH), 2203–2246 (RYLF…DHDT), 2247–2290 (GYIY…FGES), and 2291–2333 (IIWV…FDEH). Residues Asn-2131, Asn-2134, Asn-2178, and Asn-2225 are each glycosylated (N-linked (GlcNAc...) asparagine). A glycan (N-linked (GlcNAc...) asparagine) is linked at Asn-2396. 5 LDL-receptor class B repeats span residues 2432 to 2478 (NRIF…DWIN), 2479 to 2519 (RRIY…DPCR), 2520 to 2563 (GYMY…DLET), 2564 to 2605 (DLLY…YGQY), and 2606 to 2647 (IYWT…VVKT). N-linked (GlcNAc...) asparagine glycans are attached at residues Asn-2488 and Asn-2548. 10 LDL-receptor class A domains span residues 2700 to 2738 (RCNQ…TVCA), 2741 to 2777 (TCRS…AGCL), 2780 to 2819 (SCNS…KNCP), 2822 to 2861 (TCQP…IYCA), 2864 to 2902 (TCRS…DTCG), 2907 to 2946 (SCSA…HHCE), 2949 to 2991 (NCSS…QNCT), 2994 to 3030 (ACST…RGCS), 3033 to 3071 (PCRD…HLCH), and 3076 to 3112 (TCPP…KGCG). 18 disulfide bridges follow: Cys-2701-Cys-2713, Cys-2708-Cys-2726, Cys-2720-Cys-2737, Cys-2742-Cys-2754, Cys-2749-Cys-2767, Cys-2761-Cys-2776, Cys-2781-Cys-2794, Cys-2789-Cys-2807, Cys-2801-Cys-2818, Cys-2823-Cys-2836, Cys-2830-Cys-2849, Cys-2843-Cys-2860, Cys-2865-Cys-2878, Cys-2872-Cys-2891, Cys-2885-Cys-2901, Cys-2908-Cys-2920, Cys-2915-Cys-2933, and Cys-2927-Cys-2945. An N-linked (GlcNAc...) asparagine glycan is attached at Asn-2782. The N-linked (GlcNAc...) asparagine glycan is linked to Asn-2810. Asn-2949 carries N-linked (GlcNAc...) asparagine glycosylation. 18 cysteine pairs are disulfide-bonded: Cys-2950–Cys-2967, Cys-2957–Cys-2980, Cys-2974–Cys-2990, Cys-2995–Cys-3007, Cys-3002–Cys-3020, Cys-3014–Cys-3029, Cys-3034–Cys-3046, Cys-3041–Cys-3059, Cys-3053–Cys-3070, Cys-3077–Cys-3089, Cys-3084–Cys-3102, Cys-3096–Cys-3111, Cys-3116–Cys-3128, Cys-3124–Cys-3137, Cys-3139–Cys-3152, Cys-3158–Cys-3169, Cys-3165–Cys-3178, and Cys-3180–Cys-3193. An N-linked (GlcNAc...) asparagine glycan is attached at Asn-2989. Positions 3112-3153 (GINECQDSSISHCDHNCTDTITSFYCSCLPGYKLMSDKRTCV) constitute an EGF-like 3 domain. Asn-3127 carries an N-linked (GlcNAc...) asparagine glycan. Residues 3154-3194 (DIDECKETPQLCSQKCENVIGSYICKCAPGYIREPDGKSCR) enclose the EGF-like 4; calcium-binding domain. 4 N-linked (GlcNAc...) asparagine glycosylation sites follow: Asn-3213, Asn-3259, Asn-3317, and Asn-3357. LDL-receptor class B repeat units lie at residues 3241–3283 (ERLY…DWVS), 3284–3326 (RKLY…ENPR), 3335–3378 (GYVY…DYTN), 3379–3421 (DLLY…FEDT), and 3422–3462 (VFWT…LHPY). A glycan (N-linked (GlcNAc...) asparagine) is linked at Asn-3448. 8 LDL-receptor class A domains span residues 3513-3551 (MCSS…DLCP), 3554-3592 (FCRL…VLCE), 3595-3633 (RCEA…SHCA), 3636-3674 (TCRP…HECM), 3679-3717 (NCDN…QGCE), 3720-3757 (PCHP…ESCV), 3760-3796 (ECTE…RDCE), and 3799-3835 (TCHP…SACP). Disulfide bonds link Cys-3514–Cys-3527, Cys-3521–Cys-3540, Cys-3534–Cys-3550, Cys-3555–Cys-3567, Cys-3562–Cys-3580, Cys-3574–Cys-3591, Cys-3596–Cys-3608, Cys-3603–Cys-3621, Cys-3615–Cys-3632, Cys-3637–Cys-3649, Cys-3644–Cys-3662, Cys-3656–Cys-3673, Cys-3680–Cys-3694, Cys-3688–Cys-3707, Cys-3701–Cys-3716, Cys-3721–Cys-3734, Cys-3729–Cys-3747, Cys-3741–Cys-3756, Cys-3761–Cys-3773, Cys-3768–Cys-3786, Cys-3780–Cys-3795, Cys-3800–Cys-3812, Cys-3807–Cys-3825, and Cys-3819–Cys-3834. The N-linked (GlcNAc...) asparagine glycan is linked to Asn-3566. N-linked (GlcNAc...) asparagine glycosylation occurs at Asn-3682. N-linked (GlcNAc...) asparagine glycosylation occurs at Asn-3840. 3 LDL-receptor class A domains span residues 3843–3881 (YCPA…HLCF), 3884–3923 (PCES…EHCR), and 3929–3965 (PCTD…TGCN). 9 disulfides stabilise this stretch: Cys-3844/Cys-3856, Cys-3851/Cys-3869, Cys-3863/Cys-3880, Cys-3885/Cys-3898, Cys-3893/Cys-3911, Cys-3905/Cys-3922, Cys-3930/Cys-3942, Cys-3937/Cys-3955, and Cys-3949/Cys-3964. N-linked (GlcNAc...) asparagine glycans are attached at residues Asn-3969 and Asn-3980. The 42-residue stretch at 4009-4050 (DINECEEFGICPQSCRNSKGSYECFCVDGFKSMSTHYGERCA) folds into the EGF-like 5; calcium-binding domain. Cystine bridges form between Cys-4013–Cys-4023, Cys-4019–Cys-4032, and Cys-4034–Cys-4049. N-linked (GlcNAc...) asparagine glycosylation occurs at Asn-4070. LDL-receptor class B repeat units follow at residues 4156–4198 (RHIY…NPKL), 4199–4242 (GLMF…DYLN), and 4244–4285 (DRIY…FEDQ). Asn-4329 carries N-linked (GlcNAc...) asparagine glycosylation. Residues 4379 to 4413 (MPSPCRCMHGGSCYFDENDLPKCKCSSGYSGEYCE) form the EGF-like 6 domain. Intrachain disulfides connect Cys-4383-Cys-4391, Cys-4385-Cys-4401, and Cys-4403-Cys-4412. A helical membrane pass occupies residues 4426–4446 (MALLLTFAMVIIVGALVLVGF). The Cytoplasmic portion of the chain corresponds to 4447-4660 (FHYRKTGSLL…ANLVKEDSDV (214 aa)). Residues 4454–4463 (SLLPSLPKLP) carry the SH3-binding motif. Positions 4457–4462 (PSLPKL) match the PxLPxI/L motif 1; mediates interaction with ANKRA2 motif. Positions 4460-4465 (PKLPSL) match the PxLPxI/L motif 2; mediates interaction with ANKRA2 motif. Phosphoserine is present on residues Ser-4464 and Ser-4467. The short motif at 4522–4527 (FENPMY) is the Endocytosis signal element. Residues 4558–4660 (QNYGRSIDPS…ANLVKEDSDV (103 aa)) are disordered. Residue Ser-4577 is modified to Phosphoserine. Positions 4597–4610 (QTTNFENPIYAEMD) are interaction with DAB2. The NPXY motif signature appears at 4603-4606 (NPIY). The SH2-binding motif lies at 4606-4609 (YAEM). Residues 4619–4630 (VAPPPSPSLPAK) carry the SH3-binding motif. The residue at position 4624 (Ser-4624) is a Phosphoserine. Positions 4627-4636 (LPAKASKRSS) are enriched in low complexity. Residue Thr-4637 is modified to Phosphothreonine. Ser-4658 is modified (phosphoserine).

It belongs to the LDLR family. As to quaternary structure, binds plasminogen, extracellular matrix components, plasminogen activator-plasminogen activator inhibitor type I complex, apolipoprotein E-enriched beta-VLDL, lipoprotein lipase, lactoferrin, CLU/clusterin and calcium. Forms a multimeric complex together with LRPAP1. Interacts (via PxLPxI/L motif) with ANKRA2 (via ankyrin repeats). Interacts with LRP2BP. Interacts (via NPXY motif) with DAB2; the interaction is not affected by tyrosine phosphorylation of the NPXY motif. Interacts with MB. Interacts with BMP4. Interacts with the Sonic hedgehog protein N-product which is the active product of SHH. Interacts with CST3 in a calcium-dependent manner. Interacts with the vitamin-D binding protein GC/DBP. Interacts with sex hormone-binding protein SHBG. Interacts with angiotensin-2. Also interacts with angiotensin 1-7. Interacts with APOM. Interacts with selenoprotein SEPP1. Interacts with LEP. Interacts with ALB. Interacts with the antiapoptotic protein BIRC5/survivin. Interacts with matrix metalloproteinase MMP2 in complex with metalloproteinase inhibitor TIMP1. In neurons, forms a trimeric complex with APP and APPB1/FE65. Interacts with LDLRAP1/ARH; mediates trafficking of LRP2 to the endocytic recycling compartment. Does not interact with beta-amyloid protein 40 alone but interacts with the complex composed of beta-amyloid protein 40 and CLU/APOJ. Interacts with MDK. Post-translationally, a fraction undergoes proteolytic cleavage of the extracellular domain at the cell membrane to generate a cytoplasmic tail fragment. This is internalized into the early endosome from where it trafficks in an LDLRAP1/ARH-dependent manner to the endocytic recycling compartment (ERC). In the ERC, it is further cleaved by gamma-secretase to release a fragment which translocates to the nucleus and mediates transcriptional repression. N-glycosylation is required for ligand binding. Contains core-fucosylated N-glycans in kidney proximal convoluted tubules (PCTs) and hybrid-type N-glycans in proximal straight tubules (PSTs). Interacts with ligands in a glycoform-dependent manner. Retinol-binding protein and the vitamin D carrier GC/DBP are endocytosed primarily by PCTs, albumin is endocytosed equally by PCTs and PSTs, and the aminoglycoside kanamycin is endocytosed primarily by PSTs. In the inner ear, strongly expressed in the marginal cells of the stria vascularis (at protein level). In the female reproductive tract, expressed on the luminal side of the uterine epithelium (at protein level). In the adult brain, expressed in ependymal cells of the lateral ventricles where expression is restricted to the ependyma that faces the stem cell niche (at protein level). Expressed in neurons throughout the brain including in the hippocampus, limbic cortices and cerebellum (at protein level). In the developing optic nerve, expressed exclusively in astrocytes at 14.5 dpc, 16.5 dpc and 18.5 dpc (at protein level).

It localises to the apical cell membrane. The protein resides in the endosome lumen. The protein localises to the membrane. Its subcellular location is the coated pit. It is found in the cell projection. It localises to the dendrite. The protein resides in the axon. In terms of biological role, multiligand endocytic receptor. Acts together with CUBN to mediate endocytosis of high-density lipoproteins. Mediates receptor-mediated uptake of polybasic drugs such as aprotinin, aminoglycosides and polymyxin B. In the kidney, mediates the tubular uptake and clearance of leptin. Also mediates transport of leptin across the blood-brain barrier through endocytosis at the choroid plexus epithelium. Endocytosis of leptin in neuronal cells is required for hypothalamic leptin signaling and leptin-mediated regulation of feeding and body weight. Mediates endocytosis and subsequent lysosomal degradation of CST3 in kidney proximal tubule cells. Mediates renal uptake of 25-hydroxyvitamin D3 in complex with the vitamin D3 transporter GC/DBP. Mediates renal uptake of metallothionein-bound heavy metals. Together with CUBN, mediates renal reabsorption of myoglobin. Mediates renal uptake and subsequent lysosomal degradation of APOM. Plays a role in kidney selenium homeostasis by mediating renal endocytosis of selenoprotein SEPP1. Mediates renal uptake of the antiapoptotic protein BIRC5/survivin which may be important for functional integrity of the kidney. Mediates renal uptake of matrix metalloproteinase MMP2 in complex with metalloproteinase inhibitor TIMP1. Mediates endocytosis of Sonic hedgehog protein N-product (ShhN), the active product of SHH. Also mediates ShhN transcytosis. In the embryonic neuroepithelium, mediates endocytic uptake and degradation of BMP4, is required for correct SHH localization in the ventral neural tube and plays a role in patterning of the ventral telencephalon. Required at the onset of neurulation to sequester SHH on the apical surface of neuroepithelial cells of the rostral diencephalon ventral midline and to control PTCH1-dependent uptake and intracellular trafficking of SHH. During neurulation, required in neuroepithelial cells for uptake of folate bound to the folate receptor FOLR1 which is necessary for neural tube closure. In the adult brain, negatively regulates BMP signaling in the subependymal zone which enables neurogenesis to proceed. In astrocytes, mediates endocytosis of ALB which is required for the synthesis of the neurotrophic factor oleic acid. Involved in neurite branching. During optic nerve development, required for SHH-mediated migration and proliferation of oligodendrocyte precursor cells. Mediates endocytic uptake and clearance of SHH in the retinal margin which protects retinal progenitor cells from mitogenic stimuli and keeps them quiescent. Plays a role in reproductive organ development by mediating uptake in reproductive tissues of androgen and estrogen bound to the sex hormone binding protein SHBG. Mediates endocytosis of angiotensin-2. Also mediates endocytosis of angiotensin 1-7. Binds to the complex composed of beta-amyloid protein 40 and CLU/APOJ and mediates its endocytosis and lysosomal degradation. Required for embryonic heart development. Required for normal hearing, possibly through interaction with estrogen in the inner ear. This chain is Low-density lipoprotein receptor-related protein 2 (Lrp2), found in Mus musculus (Mouse).